Consider the following 116-residue polypeptide: Chorion protein S15 (116 aa).

Positions 1–18 (MKFLIAFAVLALVACINA) are cleaved as a signal peptide.

This sequence belongs to the chorion protein S15/S18 family.

The protein localises to the secreted. Chorion membrane (egg shell) protein; plays a role in protecting the egg from the environment. This Drosophila virilis (Fruit fly) protein is Chorion protein S15 (Cp15).